Reading from the N-terminus, the 322-residue chain is Olfactory receptor 1J1 (322 aa).

Topologically, residues 1 to 25 (MSPENQSSVSEFLLLGLPIRPEQQA) are extracellular. Asparagine 5 is a glycosylation site (N-linked (GlcNAc...) asparagine). Residues 26–49 (VFFALFLGMYLTTVLGNLLIMLLI) form a helical membrane-spanning segment. Over 50-57 (QLDSHLHT) the chain is Cytoplasmic. A helical transmembrane segment spans residues 58-79 (PMYFFLSHLALTDISFSSVTVP). The Extracellular segment spans residues 80 to 100 (KMLMNMQTQHLAVFYKGCISQ). Residues cysteine 97 and cysteine 189 are joined by a disulfide bond. Residues 101–120 (TYFFIFFADLDSFLITSMAY) form a helical membrane-spanning segment. The Cytoplasmic portion of the chain corresponds to 121–139 (DRYVAICHPLHYATIMTQS). A helical transmembrane segment spans residues 140–158 (QCVMLVAGSWVIACACALL). The Extracellular portion of the chain corresponds to 159–196 (HTLLLAQLSFCADHIIPHYFCDLGALLKLSCSDTSLNQ). The helical transmembrane segment at 197 to 219 (LAIFTAALTAIMLPFLCILVSYG) threads the bilayer. Topologically, residues 220-236 (HIGVTILQIPSTKGICK) are cytoplasmic. A helical transmembrane segment spans residues 237–259 (ALSTCGSHLSVVTIYYRTIIGLY). The Extracellular segment spans residues 260-272 (FLPPSSNTNDKNI). The helical transmembrane segment at 273–292 (IASVIYTAVTPMLNPFIYSL) threads the bilayer. Residues 293 to 322 (RNKDIKGALRKLLSRSGAVAHACNLNTLGG) lie on the Cytoplasmic side of the membrane.

Belongs to the G-protein coupled receptor 1 family.

The protein localises to the cell membrane. Its function is as follows. Odorant receptor. The protein is Olfactory receptor 1J1 of Homo sapiens (Human).